Consider the following 145-residue polypeptide: Transcriptional regulator MraZ (145 aa).

SpoVT-AbrB domains follow at residues 5-49 and 78-121; these read TYNH…LESE and TYKI…AKEV.

Belongs to the MraZ family. In terms of assembly, forms oligomers.

The protein localises to the cytoplasm. It localises to the nucleoid. This is Transcriptional regulator MraZ from Ureaplasma parvum serovar 3 (strain ATCC 27815 / 27 / NCTC 11736).